The following is an 880-amino-acid chain: Valine--tRNA ligase (880 aa).

The 'HIGH' region signature appears at 48 to 58 (PNVTGKLHLGH). A 'KMSKS' region motif is present at residues 524-528 (KMSKS). Lysine 527 serves as a coordination point for ATP. A coiled-coil region spans residues 808–879 (LAGLINIEEE…VKERIAQLRS (72 aa)).

The protein belongs to the class-I aminoacyl-tRNA synthetase family. ValS type 1 subfamily. Monomer.

The protein localises to the cytoplasm. It carries out the reaction tRNA(Val) + L-valine + ATP = L-valyl-tRNA(Val) + AMP + diphosphate. Its function is as follows. Catalyzes the attachment of valine to tRNA(Val). As ValRS can inadvertently accommodate and process structurally similar amino acids such as threonine, to avoid such errors, it has a 'posttransfer' editing activity that hydrolyzes mischarged Thr-tRNA(Val) in a tRNA-dependent manner. This is Valine--tRNA ligase from Enterococcus faecalis (strain ATCC 700802 / V583).